We begin with the raw amino-acid sequence, 172 residues long: Putative metal-dependent hydrolase OB0782 (172 aa).

Residues H64, H155, and H159 each contribute to the Zn(2+) site.

It belongs to the metal hydrolase YfiT family. Homodimer. The cofactor is Zn(2+).

The protein localises to the cytoplasm. Its function is as follows. Possible metal-dependent hydrolase. This chain is Putative metal-dependent hydrolase OB0782, found in Oceanobacillus iheyensis (strain DSM 14371 / CIP 107618 / JCM 11309 / KCTC 3954 / HTE831).